The chain runs to 514 residues: Phospholipase C D (514 aa).

Residues 1–37 constitute a signal peptide (tat-type signal); it reads MSQSHIGGVSRREFLAKVAAGGAGALMSFAGPVIEKA. Positions 492 to 514 are disordered; sequence VPDPQIMPTQETTPTRGIPSGPC.

The protein belongs to the bacterial phospholipase C family. Post-translationally, predicted to be exported by the Tat system. The position of the signal peptide cleavage has not been experimentally proven.

Its subcellular location is the secreted. It localises to the cell wall. The catalysed reaction is a 1,2-diacyl-sn-glycero-3-phosphocholine + H2O = phosphocholine + a 1,2-diacyl-sn-glycerol + H(+). In terms of biological role, involved in virulence. Induces cytotoxic effects on mouse macrophage cell lines, via direct or indirect enzymatic hydrolysis of cell membrane phospholipids. Hydrolyzes phosphatidylcholine. The polypeptide is Phospholipase C D (Mycobacterium tuberculosis (strain CDC 1551 / Oshkosh)).